Here is a 408-residue protein sequence, read N- to C-terminus: Protein ZNF365 (408 aa).

Serine 16 is modified (phosphoserine). The C2H2-type; degenerate zinc finger occupies 26–51 (FRCPRCGDHTRFRSLSSLRAHLEFSH). 2 positions are modified to phosphoserine: serine 139 and serine 146. Residues 170–298 (VEAVDRTIEK…QLEYYQSQQA (129 aa)) adopt a coiled-coil conformation. Threonine 176 is subject to Phosphothreonine. Serine 370 carries the phosphoserine modification.

In terms of assembly, homodimers. Interacts with NDE1 and NDEL1. Interacts with DISC1. Interacts with PARP1. Interacts with MCRS1. In terms of tissue distribution, expressed in cerebral cortex, hippocampus, olfactory tubercle and striatum.

It is found in the cytoplasm. The protein resides in the cytoskeleton. Its subcellular location is the microtubule organizing center. The protein localises to the centrosome. Its function is as follows. Involved in the positive regulation of oligodendrocyte differentiation during postnatal growth. Involved in the morphogenesis of basket cells in the somatosensory cortex during embryogenesis. Involved in dendritic arborization, morphogenesis of spine density dendrite, and establishment of postsynaptic dendrite density in cortical pyramidal neurons. Involved in the regulation of neurogenesis. Negatively regulates neurite outgrowth. Involved in homologous recombination (HR) repair pathway. Required for proper resolution of DNA double-strand breaks (DSBs) by HR. Is required for recovery of stalled replication forks, and directly contributes to genomic stability. Interacts with PARP1 and mediates MRE11-dependent DNA end resection during replication fork recovery. Contributes to genomic stability by preventing telomere dysfunction. The sequence is that of Protein ZNF365 (Znf365) from Rattus norvegicus (Rat).